The following is a 219-amino-acid chain: Germin-like protein subfamily 2 member 3 (219 aa).

The N-terminal stretch at 1–22 (MATSMIPIFVTFMLVAAHMALA) is a signal peptide. Cysteine 31 and cysteine 46 form a disulfide bridge. Residues 60–209 (IGLATAAATA…AFGAAAPEIQ (150 aa)) form the Cupin type-1 domain. A glycan (N-linked (GlcNAc...) asparagine) is linked at asparagine 70. Mn(2+)-binding residues include histidine 109, histidine 111, glutamate 116, and histidine 155.

It belongs to the germin family. In terms of assembly, oligomer (believed to be a pentamer but probably hexamer).

It is found in the secreted. It localises to the extracellular space. The protein localises to the apoplast. May play a role in plant defense. Probably has no oxalate oxidase activity even if the active site is conserved. The polypeptide is Germin-like protein subfamily 2 member 3 (GLP8) (Arabidopsis thaliana (Mouse-ear cress)).